Consider the following 141-residue polypeptide: Large ribosomal subunit protein uL11 (141 aa).

The protein belongs to the universal ribosomal protein uL11 family. In terms of assembly, part of the ribosomal stalk of the 50S ribosomal subunit. Interacts with L10 and the large rRNA to form the base of the stalk. L10 forms an elongated spine to which L12 dimers bind in a sequential fashion forming a multimeric L10(L12)X complex. One or more lysine residues are methylated.

Its function is as follows. Forms part of the ribosomal stalk which helps the ribosome interact with GTP-bound translation factors. In Ruegeria sp. (strain TM1040) (Silicibacter sp.), this protein is Large ribosomal subunit protein uL11.